Consider the following 58-residue polypeptide: UPF0391 membrane protein Shewmr4_2671 (58 aa).

2 helical membrane-spanning segments follow: residues 6 to 26 (LMFL…IAGA) and 28 to 48 (AGIA…SLLV).

Belongs to the UPF0391 family.

It localises to the cell membrane. The sequence is that of UPF0391 membrane protein Shewmr4_2671 from Shewanella sp. (strain MR-4).